We begin with the raw amino-acid sequence, 766 residues long: Pumilio domain-containing protein 12 (766 aa).

Disordered stretches follow at residues 63-98 and 152-197; these read KKSS…KSKK and AQEE…GDES. Over residues 79 to 88 the composition is skewed to polar residues; it reads SLCSESSFGS. Residues 179 to 193 show a composition bias toward acidic residues; it reads PADDENLESVDEQAG. The PUM-HD domain maps to 245–602; that stretch reads ARAQKCKELW…LYAGITENLY (358 aa). 4 Pumilio repeats span residues 313–348, 461–496, 497–534, and 535–571; these read ELTP…IIIN, SLKD…LIVK, NFKD…VIVS, and ELAN…REIT.

In Caenorhabditis elegans, this protein is Pumilio domain-containing protein 12 (puf-12).